The primary structure comprises 290 residues: Lipoyl synthase (290 aa).

The [4Fe-4S] cluster site is built by cysteine 36, cysteine 41, cysteine 47, cysteine 62, cysteine 66, cysteine 69, and serine 275. In terms of domain architecture, Radical SAM core spans 48–264; sequence FSKKTATFMI…KEEALKIGFS (217 aa).

It belongs to the radical SAM superfamily. Lipoyl synthase family. The cofactor is [4Fe-4S] cluster.

The protein localises to the cytoplasm. It catalyses the reaction [[Fe-S] cluster scaffold protein carrying a second [4Fe-4S](2+) cluster] + N(6)-octanoyl-L-lysyl-[protein] + 2 oxidized [2Fe-2S]-[ferredoxin] + 2 S-adenosyl-L-methionine + 4 H(+) = [[Fe-S] cluster scaffold protein] + N(6)-[(R)-dihydrolipoyl]-L-lysyl-[protein] + 4 Fe(3+) + 2 hydrogen sulfide + 2 5'-deoxyadenosine + 2 L-methionine + 2 reduced [2Fe-2S]-[ferredoxin]. Its pathway is protein modification; protein lipoylation via endogenous pathway; protein N(6)-(lipoyl)lysine from octanoyl-[acyl-carrier-protein]: step 2/2. Functionally, catalyzes the radical-mediated insertion of two sulfur atoms into the C-6 and C-8 positions of the octanoyl moiety bound to the lipoyl domains of lipoate-dependent enzymes, thereby converting the octanoylated domains into lipoylated derivatives. This chain is Lipoyl synthase, found in Alkaliphilus metalliredigens (strain QYMF).